Here is a 366-residue protein sequence, read N- to C-terminus: Fructose-bisphosphate aldolase 1 (366 aa).

Substrate is bound by residues Arg56 and Lys147. Glu189 functions as the Proton acceptor in the catalytic mechanism. Catalysis depends on Lys231, which acts as the Schiff-base intermediate with dihydroxyacetone-P.

The protein belongs to the class I fructose-bisphosphate aldolase family. Ubiquitous.

It catalyses the reaction beta-D-fructose 1,6-bisphosphate = D-glyceraldehyde 3-phosphate + dihydroxyacetone phosphate. The protein operates within carbohydrate degradation; glycolysis; D-glyceraldehyde 3-phosphate and glycerone phosphate from D-glucose: step 4/4. In terms of biological role, may be involved in the metabolism of fructose-bisphosphate (beta-D-fructose 1,6-bisphosphate) and of fructose 1-phosphate. This chain is Fructose-bisphosphate aldolase 1 (aldo-1), found in Caenorhabditis elegans.